Here is a 266-residue protein sequence, read N- to C-terminus: Inositol-1-monophosphatase (266 aa).

Mg(2+) contacts are provided by glutamate 69, aspartate 86, leucine 88, and aspartate 89. Position 69 (glutamate 69) interacts with substrate. Substrate-binding positions include 88–91, arginine 185, and aspartate 214; that span reads LDGT. Residue aspartate 214 participates in Mg(2+) binding.

The protein belongs to the inositol monophosphatase superfamily. It depends on Mg(2+) as a cofactor.

The enzyme catalyses a myo-inositol phosphate + H2O = myo-inositol + phosphate. The sequence is that of Inositol-1-monophosphatase (suhB) from Rhizobium meliloti (strain 1021) (Ensifer meliloti).